The primary structure comprises 269 residues: 2-dehydro-3-deoxyphosphooctonate aldolase (269 aa).

The protein belongs to the KdsA family.

Its subcellular location is the cytoplasm. It carries out the reaction D-arabinose 5-phosphate + phosphoenolpyruvate + H2O = 3-deoxy-alpha-D-manno-2-octulosonate-8-phosphate + phosphate. Its pathway is carbohydrate biosynthesis; 3-deoxy-D-manno-octulosonate biosynthesis; 3-deoxy-D-manno-octulosonate from D-ribulose 5-phosphate: step 2/3. It functions in the pathway bacterial outer membrane biogenesis; lipopolysaccharide biosynthesis. The sequence is that of 2-dehydro-3-deoxyphosphooctonate aldolase from Chlamydia trachomatis serovar A (strain ATCC VR-571B / DSM 19440 / HAR-13).